The chain runs to 375 residues: Glutamate 5-kinase (375 aa).

ATP is bound at residue lysine 13. The substrate site is built by serine 54, aspartate 141, and asparagine 153. ATP is bound by residues 173 to 174 and 216 to 222; these read TD and TGGMATK. The region spanning 281–359 is the PUA domain; that stretch reads TGKIFIDAGA…EAIAAVLGYV (79 aa).

Belongs to the glutamate 5-kinase family.

The protein localises to the cytoplasm. The catalysed reaction is L-glutamate + ATP = L-glutamyl 5-phosphate + ADP. It participates in amino-acid biosynthesis; L-proline biosynthesis; L-glutamate 5-semialdehyde from L-glutamate: step 1/2. Functionally, catalyzes the transfer of a phosphate group to glutamate to form L-glutamate 5-phosphate. The sequence is that of Glutamate 5-kinase from Synechocystis sp. (strain ATCC 27184 / PCC 6803 / Kazusa).